We begin with the raw amino-acid sequence, 202 residues long: Venom allergen 5 (202 aa).

Cystine bridges form between Cys4–Cys16, Cys8–Cys101, and Cys26–Cys94. Position 107 is a phosphotyrosine (Tyr107). Lys138 carries an N-linked (Glc) (glycation) lysine glycan. The cysteines at positions 168 and 185 are disulfide-linked.

This sequence belongs to the CRISP family. In terms of tissue distribution, expressed by the venom gland.

The protein localises to the secreted. In terms of biological role, does not show toxicity when intravenously injected into mice tail. The chain is Venom allergen 5 from Vespa velutina (Asian yellow-legged hornet).